The following is a 460-amino-acid chain: Photosystem II CP43 reaction center protein (460 aa).

Residue Met1 is a propeptide. The next 5 membrane-spanning stretches (helical) occupy residues 56–80 (LFET…PHLA), 121–142 (IVGP…RDKN), 165–187 (KALF…RFIT), 242–262 (RPFS…LSYS), and 278–299 (WYNN…ASQA). Glu354 is a binding site for [CaMn4O5] cluster. The chain crosses the membrane as a helical span at residues 434 to 458 (RARAAAAGFEKGINRENEPVLSMRP).

This sequence belongs to the PsbB/PsbC family. PsbC subfamily. In terms of assembly, PSII is composed of 1 copy each of membrane proteins PsbA, PsbB, PsbC, PsbD, PsbE, PsbF, PsbH, PsbI, PsbJ, PsbK, PsbL, PsbM, PsbT, PsbY, PsbZ, Psb30/Ycf12, at least 3 peripheral proteins of the oxygen-evolving complex and a large number of cofactors. It forms dimeric complexes. Binds multiple chlorophylls and provides some of the ligands for the Ca-4Mn-5O cluster of the oxygen-evolving complex. It may also provide a ligand for a Cl- that is required for oxygen evolution. PSII binds additional chlorophylls, carotenoids and specific lipids. serves as cofactor.

Its subcellular location is the plastid. It localises to the chloroplast thylakoid membrane. Its function is as follows. One of the components of the core complex of photosystem II (PSII). It binds chlorophyll and helps catalyze the primary light-induced photochemical processes of PSII. PSII is a light-driven water:plastoquinone oxidoreductase, using light energy to abstract electrons from H(2)O, generating O(2) and a proton gradient subsequently used for ATP formation. This Cyanidium caldarium (Red alga) protein is Photosystem II CP43 reaction center protein.